The following is a 140-amino-acid chain: UPF0225 protein SAV_6631 (140 aa).

Positions 1-22 (MSKSRRTRSTSRPTSRPQPASC) are disordered. Residues 10–19 (TSRPTSRPQP) show a composition bias toward low complexity.

It belongs to the UPF0225 family.

This Streptomyces avermitilis (strain ATCC 31267 / DSM 46492 / JCM 5070 / NBRC 14893 / NCIMB 12804 / NRRL 8165 / MA-4680) protein is UPF0225 protein SAV_6631.